A 210-amino-acid chain; its full sequence is Silenced mating-type protein ALPHA2 (210 aa).

Met-1 bears the N-acetylmethionine mark. The tract at residues 1 to 102 (MNKIPIKDLL…RSIENDRSNY (102 aa)) is N-terminal domain. Residues 103-128 (QLTQKNKSADGLVFNVVTQDMINKST) form a flexible linker region. A DNA-binding region (homeobox; TALE-type) is located at residues 129–191 (KPYRGHRFTK…NRRRKEKTIT (63 aa)). The C-terminal tail stretch occupies residues 190–210 (ITIAPELADLLSGEPLAKKKE).

It belongs to the TALE/M-ATYP homeobox family.

The protein localises to the nucleus. Functionally, mating type proteins are sequence specific DNA-binding proteins that act as master switches in yeast differentiation by controlling gene expression in a cell type-specific fashion. Silenced copy of ALPHA2 at HML. The chain is Silenced mating-type protein ALPHA2 (HMLALPHA2) from Saccharomyces cerevisiae (strain ATCC 204508 / S288c) (Baker's yeast).